Reading from the N-terminus, the 486-residue chain is Zinc finger chaperone ZPR1 (486 aa).

Residues 1–31 are disordered; that stretch reads MSEQKEDLFKPVGEAAAEVEDESIAEQNKAN. A Phosphoserine modification is found at S23. 2 C4-type zinc fingers span residues 54–86 and 295–327; these read CMNC…CPHC and CPSC…CDHC. A Phosphothreonine modification is found at T407.

The protein belongs to the ZPR1 family. Interacts with elongation factor 1-alpha.

It is found in the cytoplasm. The protein resides in the nucleus. Functionally, acts as a protein folding chaperone for elongation factor 1-alpha. This Saccharomyces cerevisiae (strain ATCC 204508 / S288c) (Baker's yeast) protein is Zinc finger chaperone ZPR1.